The following is a 288-amino-acid chain: MAGAKEIRTKIASVKNTQKITKAMEMVATSKMRKTQERMAASRPYSETIRKVISHIAKGSIGYKHPFLTERDIKKVGYLVVSTDRGLCGGLNINLFKATLNEFKTWKDKDVSVELGLVGSKGVSFYQNLGLNVRSQVTGLGDNPEMERIVGAVNEMINAFRNGEVDAVYVAYNRFENTMSQKPVIAQLLPLPKLDDDELDTKGSWDYIYEPNPQVLLDSLLVRYLETQVYQAVVDNLASEQAARMVAMKAATDNAGTLIDELQLVYNKARQASITNELNEIVAGAAAI.

Belongs to the ATPase gamma chain family. As to quaternary structure, F-type ATPases have 2 components, CF(1) - the catalytic core - and CF(0) - the membrane proton channel. CF(1) has five subunits: alpha(3), beta(3), gamma(1), delta(1), epsilon(1). CF(0) has three main subunits: a, b and c.

It is found in the cell inner membrane. Functionally, produces ATP from ADP in the presence of a proton gradient across the membrane. The gamma chain is believed to be important in regulating ATPase activity and the flow of protons through the CF(0) complex. The chain is ATP synthase gamma chain from Actinobacillus pleuropneumoniae serotype 5b (strain L20).